Consider the following 298-residue polypeptide: Lysozyme-like protein 1 (298 aa).

The first 16 residues, 1-16 (MLKLAFVTFLFALASA), serve as a signal peptide directing secretion. One can recognise a Ch-type lysozyme domain in the interval 59-277 (YAYAVDISVP…AAASSKNTDF (219 aa)).

It belongs to the glycosyl hydrolase 25 family. As to expression, expressed in intestine, IL2 and IL6 neurons and some neurons in the head ganglia.

The protein resides in the cytoplasmic vesicle lumen. In terms of biological role, involved in resistance to Gram-negative bacterium S.marcescens and to bacterium Gram-positive S.aureus infection. This is Lysozyme-like protein 1 from Caenorhabditis elegans.